The chain runs to 127 residues: Prophage antitermination protein Q homolog QuuD (127 aa).

This sequence belongs to the phage antitermination Q type 1 family.

Functionally, positively regulate expression of some phage genes. Bacterial host RNA polymerase modified by antitermination proteins transcribes through termination sites that otherwise prevent expression of the regulated genes. The sequence is that of Prophage antitermination protein Q homolog QuuD (quuD) from Escherichia coli (strain K12).